Reading from the N-terminus, the 332-residue chain is 2,3-diketo-L-gulonate reductase (332 aa).

The Proton donor role is filled by H44. Residues 168 to 174 (ITMVDMS), 224 to 225 (WK), and 304 to 306 (GHE) each bind NAD(+).

This sequence belongs to the LDH2/MDH2 oxidoreductase family. DlgD subfamily. As to quaternary structure, homodimer.

It is found in the cytoplasm. It carries out the reaction 3-dehydro-L-gulonate + NAD(+) = 2,3-dioxo-L-gulonate + NADH + H(+). The enzyme catalyses 3-dehydro-L-gulonate + NADP(+) = 2,3-dioxo-L-gulonate + NADPH + H(+). In terms of biological role, catalyzes the reduction of 2,3-diketo-L-gulonate in the presence of NADH, to form 3-keto-L-gulonate. This chain is 2,3-diketo-L-gulonate reductase, found in Salmonella paratyphi B (strain ATCC BAA-1250 / SPB7).